The primary structure comprises 892 residues: Alanine--tRNA ligase (892 aa).

Zn(2+)-binding residues include histidine 574, histidine 578, cysteine 676, and histidine 680.

The protein belongs to the class-II aminoacyl-tRNA synthetase family. It depends on Zn(2+) as a cofactor.

It localises to the cytoplasm. The enzyme catalyses tRNA(Ala) + L-alanine + ATP = L-alanyl-tRNA(Ala) + AMP + diphosphate. Functionally, catalyzes the attachment of alanine to tRNA(Ala) in a two-step reaction: alanine is first activated by ATP to form Ala-AMP and then transferred to the acceptor end of tRNA(Ala). Also edits incorrectly charged Ser-tRNA(Ala) and Gly-tRNA(Ala) via its editing domain. The protein is Alanine--tRNA ligase of Prochlorococcus marinus (strain SARG / CCMP1375 / SS120).